Here is a 296-residue protein sequence, read N- to C-terminus: Polyadenylate-binding protein 2-A (296 aa).

The segment at 1–106 is disordered; the sequence is MAAVSSVASL…GELTGDQTIE (106 aa). Residues 71–82 show a composition bias toward gly residues; that stretch reads GRGGSGGGGAGG. The span at 84-97 shows a compositional bias: acidic residues; sequence EELEDEELEEEEPG. The stretch at 107 to 141 forms a coiled coil; it reads DPELEAIKARVREMEEEAEKLKELQNEVEKQMNMS. The segment at 146 to 296 is necessary for homooligomerization; sequence NAGPVIMSVE…ARATSWYTPY (151 aa). In terms of domain architecture, RRM spans 163-240; the sequence is RSIYVGNVDY…RQIKVVPKRT (78 aa).

As to quaternary structure, monomer and homooligomer. Binds RNA as a monomer and oligomerizes when bound to poly(A). As to expression, shows dynamic spatial expression throughout development. First expressed in the animal pole region of the egg and this pattern persists through to the blastula stage. In gastrula and neurula embryos, expressed mainly in ectodermal, neural and epidermal regions. Neural tissue-specific expression pattern persists into tailbud stage when expression is localized to the brain and spinal cord. At early tadpole stage, expression becomes gradually confined to the specific vesicle regions of the developing brain. At stage 39, expressed in the telencephalon and mesencephalon regions of the brain. Also detected in the eye and olfactory pit at the tadpole stage. Expressed during gut endoderm development. At stage 35, expressed exclusively in the anterior portion of the gut endoderm, which includes the prospective liver, stomach and pancreas. As development proceeds, expression becomes restricted to the pancreas, and by stage 46/47 (the seventh day of development) expression is localized exclusively to the pancreas. Expressed in most adult tissues.

Its subcellular location is the nucleus. The protein resides in the cytoplasm. Its function is as follows. Involved in the 3'-end formation of mRNA precursors (pre-mRNA) by the addition of a poly(A) tail of 200-250 nt to the upstream cleavage product. Stimulates poly(A) polymerase (PAPOLA) conferring processivity on the poly(A) tail elongation reaction and also controls the poly(A) tail length. Increases the affinity of poly(A) polymerase for RNA. Binds to poly(A) and to poly(G) with high affinity. May protect the poly(A) tail from degradation. The protein is Polyadenylate-binding protein 2-A (pabpn1-a) of Xenopus laevis (African clawed frog).